Consider the following 224-residue polypeptide: 7-cyano-7-deazaguanine synthase (224 aa).

10-20 (LSGGLDSATVV) contributes to the ATP binding site. Residues C189, C199, C202, and C205 each contribute to the Zn(2+) site.

It belongs to the QueC family. The cofactor is Zn(2+).

The catalysed reaction is 7-carboxy-7-deazaguanine + NH4(+) + ATP = 7-cyano-7-deazaguanine + ADP + phosphate + H2O + H(+). It functions in the pathway purine metabolism; 7-cyano-7-deazaguanine biosynthesis. In terms of biological role, catalyzes the ATP-dependent conversion of 7-carboxy-7-deazaguanine (CDG) to 7-cyano-7-deazaguanine (preQ(0)). The protein is 7-cyano-7-deazaguanine synthase of Ectopseudomonas mendocina (strain ymp) (Pseudomonas mendocina).